The chain runs to 293 residues: MPEGKIVKALSGFYYVQHEEGITQCRGRGVFRKNKITPLVGDQVVFQADNPSEGYVLEVFDRKNELVRPPIANVDQAILVFSAVEPDFNPGLLDRFLVLIEYHNIKPIICISKMDLVDEKMRETVESYANDYREMGYDVLFTSINTSESIDILKPFLEGCVSVVAGQSGVGKSSMLNVLRPELELKTNDISSHLGRGKHTTRHVELIAIGSGLVADTPGFSSLDFIDIEVEDLTYCFPELKEASQYCKFRGCTHLSEPKCAVKAAVEEGKITEYRYKNYKQFVEEIRERKPRY.

The CP-type G domain occupies Lys63–Leu223. Residues Ser112–Asp115 and Gly166–Ser174 contribute to the GTP site. Zn(2+) is bound by residues Cys247, Cys252, His254, and Cys260.

It belongs to the TRAFAC class YlqF/YawG GTPase family. RsgA subfamily. In terms of assembly, monomer. Associates with 30S ribosomal subunit, binds 16S rRNA. It depends on Zn(2+) as a cofactor.

The protein localises to the cytoplasm. In terms of biological role, one of several proteins that assist in the late maturation steps of the functional core of the 30S ribosomal subunit. Helps release RbfA from mature subunits. May play a role in the assembly of ribosomal proteins into the subunit. Circularly permuted GTPase that catalyzes slow GTP hydrolysis, GTPase activity is stimulated by the 30S ribosomal subunit. The sequence is that of Small ribosomal subunit biogenesis GTPase RsgA from Bacillus cereus (strain ATCC 10987 / NRS 248).